A 277-amino-acid polypeptide reads, in one-letter code: Translation initiation factor 2 subunit alpha (277 aa).

The region spanning 22–93 (GEIVVGTVQE…KRGQVDVSLK (72 aa)) is the S1 motif domain.

It belongs to the eIF-2-alpha family. Heterotrimer composed of an alpha, a beta and a gamma chain.

In terms of biological role, eIF-2 functions in the early steps of protein synthesis by forming a ternary complex with GTP and initiator tRNA. The protein is Translation initiation factor 2 subunit alpha (eif2a) of Aeropyrum pernix (strain ATCC 700893 / DSM 11879 / JCM 9820 / NBRC 100138 / K1).